The following is a 185-amino-acid chain: Ribosome-recycling factor (185 aa).

Belongs to the RRF family.

The protein localises to the cytoplasm. Functionally, responsible for the release of ribosomes from messenger RNA at the termination of protein biosynthesis. May increase the efficiency of translation by recycling ribosomes from one round of translation to another. The sequence is that of Ribosome-recycling factor from Azoarcus sp. (strain BH72).